Reading from the N-terminus, the 260-residue chain is UPF0246 protein Cbei_1739 (260 aa).

The protein belongs to the UPF0246 family.

The protein is UPF0246 protein Cbei_1739 of Clostridium beijerinckii (strain ATCC 51743 / NCIMB 8052) (Clostridium acetobutylicum).